Here is a 124-residue protein sequence, read N- to C-terminus: Ribonuclease pancreatic (124 aa).

Basic and acidic residues predominate over residues 1–13; it reads KESAAAKFERQHI. Positions 1–23 are disordered; it reads KESAAAKFERQHIDSSTSSVSSS. Lys-7 and Arg-10 together coordinate substrate. His-12 serves as the catalytic Proton acceptor. 4 disulfides stabilise this stretch: Cys-26/Cys-84, Cys-40/Cys-95, Cys-58/Cys-110, and Cys-65/Cys-72. N-linked (GlcNAc...) asparagine glycosylation occurs at Asn-34. Residues 41-45, Lys-66, and Arg-85 contribute to the substrate site; that span reads KPVNT. The active-site Proton donor is the His-119.

Belongs to the pancreatic ribonuclease family. In terms of assembly, monomer. Interacts with and forms tight 1:1 complexes with RNH1. Dimerization of two such complexes may occur. Interaction with RNH1 inhibits this protein. Pancreas.

The protein resides in the secreted. The catalysed reaction is an [RNA] containing cytidine + H2O = an [RNA]-3'-cytidine-3'-phosphate + a 5'-hydroxy-ribonucleotide-3'-[RNA].. It catalyses the reaction an [RNA] containing uridine + H2O = an [RNA]-3'-uridine-3'-phosphate + a 5'-hydroxy-ribonucleotide-3'-[RNA].. Endonuclease that catalyzes the cleavage of RNA on the 3' side of pyrimidine nucleotides. Acts on single-stranded and double-stranded RNA. In Giraffa camelopardalis (Giraffe), this protein is Ribonuclease pancreatic (RNASE1).